A 500-amino-acid polypeptide reads, in one-letter code: NAD(P)H-quinone oxidoreductase chain 4, chloroplastic (500 aa).

14 helical membrane-spanning segments follow: residues 4 to 24 (FPWL…IFLL), 37 to 57 (LCIC…HFQL), 87 to 107 (IGPI…AWPV), 111 to 131 (AQLF…SFSS), 134 to 154 (LLLF…LLSM), 167 to 187 (FILY…GIGL), 208 to 228 (ALEV…LPII), 242 to 262 (HYST…YGLV), 272 to 292 (AHCL…IYAA), 305 to 325 (IAYS…SLSD), 330 to 350 (GAIL…FLAG), 386 to 406 (LALP…GIIT), 416 to 436 (ILIA…SLSM), and 462 to 482 (LFVS…PDFV).

This sequence belongs to the complex I subunit 4 family.

The protein localises to the plastid. The protein resides in the chloroplast thylakoid membrane. It catalyses the reaction a plastoquinone + NADH + (n+1) H(+)(in) = a plastoquinol + NAD(+) + n H(+)(out). The catalysed reaction is a plastoquinone + NADPH + (n+1) H(+)(in) = a plastoquinol + NADP(+) + n H(+)(out). This is NAD(P)H-quinone oxidoreductase chain 4, chloroplastic from Oenothera parviflora (Small-flowered evening primrose).